Consider the following 519-residue polypeptide: General transcription factor 3C polypeptide 5 (519 aa).

Ala2 carries the N-acetylalanine modification. Residues 465-519 (ALFSSSAKADGGKEQLTYESGEDEEDEEEEEEEEEDFKPSDGSENEMETEILDYV) are disordered. 2 stretches are compositionally biased toward acidic residues: residues 484 to 500 (SGED…EEED) and 507 to 519 (SENE…LDYV).

This sequence belongs to the TFIIIC subunit 5 family. As to quaternary structure, part of the TFIIIC subcomplex TFIIIC2, consisting of six subunits, GTF3C1, GTF3C2, GTF3C3, GTF3C4, GTF3C5 and GTF3C6. Interacts with BRF1, GTF3C6 and TBP.

The protein resides in the nucleus. Its function is as follows. Involved in RNA polymerase III-mediated transcription. Integral, tightly associated component of the DNA-binding TFIIIC2 subcomplex that directly binds tRNA and virus-associated RNA promoters. In Homo sapiens (Human), this protein is General transcription factor 3C polypeptide 5 (GTF3C5).